Here is a 95-residue protein sequence, read N- to C-terminus: Aspartyl/glutamyl-tRNA(Asn/Gln) amidotransferase subunit C (95 aa).

Belongs to the GatC family. As to quaternary structure, heterotrimer of A, B and C subunits.

It catalyses the reaction L-glutamyl-tRNA(Gln) + L-glutamine + ATP + H2O = L-glutaminyl-tRNA(Gln) + L-glutamate + ADP + phosphate + H(+). It carries out the reaction L-aspartyl-tRNA(Asn) + L-glutamine + ATP + H2O = L-asparaginyl-tRNA(Asn) + L-glutamate + ADP + phosphate + 2 H(+). In terms of biological role, allows the formation of correctly charged Asn-tRNA(Asn) or Gln-tRNA(Gln) through the transamidation of misacylated Asp-tRNA(Asn) or Glu-tRNA(Gln) in organisms which lack either or both of asparaginyl-tRNA or glutaminyl-tRNA synthetases. The reaction takes place in the presence of glutamine and ATP through an activated phospho-Asp-tRNA(Asn) or phospho-Glu-tRNA(Gln). The protein is Aspartyl/glutamyl-tRNA(Asn/Gln) amidotransferase subunit C of Pseudomonas fluorescens (strain SBW25).